Consider the following 568-residue polypeptide: Proline--tRNA ligase (568 aa).

Belongs to the class-II aminoacyl-tRNA synthetase family. ProS type 1 subfamily. In terms of assembly, homodimer.

The protein localises to the cytoplasm. It catalyses the reaction tRNA(Pro) + L-proline + ATP = L-prolyl-tRNA(Pro) + AMP + diphosphate. In terms of biological role, catalyzes the attachment of proline to tRNA(Pro) in a two-step reaction: proline is first activated by ATP to form Pro-AMP and then transferred to the acceptor end of tRNA(Pro). As ProRS can inadvertently accommodate and process non-cognate amino acids such as alanine and cysteine, to avoid such errors it has two additional distinct editing activities against alanine. One activity is designated as 'pretransfer' editing and involves the tRNA(Pro)-independent hydrolysis of activated Ala-AMP. The other activity is designated 'posttransfer' editing and involves deacylation of mischarged Ala-tRNA(Pro). The misacylated Cys-tRNA(Pro) is not edited by ProRS. This is Proline--tRNA ligase from Listeria welshimeri serovar 6b (strain ATCC 35897 / DSM 20650 / CCUG 15529 / CIP 8149 / NCTC 11857 / SLCC 5334 / V8).